The sequence spans 305 residues: UDP-N-acetylenolpyruvoylglucosamine reductase 2 (305 aa).

The 165-residue stretch at 33-197 (VGGKADVFVA…LEARFELEEG (165 aa)) folds into the FAD-binding PCMH-type domain. The active site involves arginine 176. Serine 226 (proton donor) is an active-site residue. Residue glutamate 296 is part of the active site.

It belongs to the MurB family. The cofactor is FAD.

It localises to the cytoplasm. The enzyme catalyses UDP-N-acetyl-alpha-D-muramate + NADP(+) = UDP-N-acetyl-3-O-(1-carboxyvinyl)-alpha-D-glucosamine + NADPH + H(+). The protein operates within cell wall biogenesis; peptidoglycan biosynthesis. In terms of biological role, cell wall formation. This is UDP-N-acetylenolpyruvoylglucosamine reductase 2 (murB2) from Bacillus cereus (strain ATCC 14579 / DSM 31 / CCUG 7414 / JCM 2152 / NBRC 15305 / NCIMB 9373 / NCTC 2599 / NRRL B-3711).